The sequence spans 275 residues: Two-component response regulator PprB (275 aa).

The Response regulatory domain occupies 10–128 (SVLIIDDEPQ…ELLHGLERLE (119 aa)). The residue at position 60 (Asp-60) is a 4-aspartylphosphate. Residues 173 to 205 (SQPSALRSEDSQPSAPPAPVAESQVSPSNPLFG) are disordered. An HTH luxR-type domain is found at 200–265 (SNPLFGKLSP…QLALALSPAA (66 aa)). The H-T-H motif DNA-binding region spans 224–243 (NYQIAYELGITENTVKLYVS).

In terms of processing, phosphorylated by PprA.

Member of the two-component regulatory system PprA/PprB involved in biofilm formation by controlling the expression of many related genes including type IVb pili major subunit flp pilin, adhesin bapA or cupE fimbriae. Functions as a transcription regulator by direct binding to promoter regions. Negatively regulates its own transcription. This chain is Two-component response regulator PprB, found in Pseudomonas aeruginosa (strain ATCC 15692 / DSM 22644 / CIP 104116 / JCM 14847 / LMG 12228 / 1C / PRS 101 / PAO1).